Reading from the N-terminus, the 136-residue chain is Protein PsiE homolog (136 aa).

4 consecutive transmembrane segments (helical) span residues 15–35 (AMQTVLNLGLLCLGIILIVFL), 58–78 (VEGLVVYFLYFEFIALIVKYF), 83–103 (HFPLRYFVYIGITAIVRLIII), and 108–128 (PMAVLIYSAAILILVITLWLC).

Belongs to the PsiE family.

It localises to the cell inner membrane. The chain is Protein PsiE homolog from Klebsiella pneumoniae (strain 342).